Reading from the N-terminus, the 187-residue chain is Putative protein YbeM (187 aa).

In terms of domain architecture, CN hydrolase spans 1-163 (MMTTILTIHV…PALIMAEVTP (163 aa)).

Belongs to the carbon-nitrogen hydrolase superfamily. NIT1/NIT2 family.

Pseudogene resulting from a nucleotide deletion that introduces a premature stop codon at position 66. This is the C-terminal fragment. The intact protein (AC A0A140NCB4) hydrolyzes deaminated glutathione (dGSH, 2-oxoglutaramate) to alpha-ketoglutarate (alpha-KG) and cysteinylglycine, has less activity against alpha-ketoglutaramate (a-KGM) and no activity on glutathione or L-glutamine. May function as a metabolite repair enzyme. This is Putative protein YbeM (ybeM) from Escherichia coli (strain K12).